Consider the following 155-residue polypeptide: uncharacterized protein (155 aa).

Positions 6 to 155 (TCVRNARLAD…CDEIAMVKTL (150 aa)) constitute an N-acetyltransferase domain.

It belongs to the acetyltransferase family.

This is an uncharacterized protein from Chlorobaculum tepidum (strain ATCC 49652 / DSM 12025 / NBRC 103806 / TLS) (Chlorobium tepidum).